A 1034-amino-acid polypeptide reads, in one-letter code: Vacuolar membrane protease (1034 aa).

Residues 1 to 11 (MAVKNPFGFTT) are Cytoplasmic-facing. A helical membrane pass occupies residues 12 to 32 (GPVTFWLIVVYAAFLIPLVWI). The Vacuolar portion of the chain corresponds to 33 to 418 (HESVPAVPSS…GFAILELRGL (386 aa)). N51 and N141 each carry an N-linked (GlcNAc...) asparagine glycan. Zn(2+)-binding residues include H200 and D212. E246 serves as the catalytic Proton acceptor. Zn(2+) contacts are provided by E247, E272, and H345. A helical membrane pass occupies residues 419-439 (FAWTLTLLIVSPLVLALVTYI). The Cytoplasmic portion of the chain corresponds to 440–470 (LSRKDKYYFFSRKVTADEDDEPVSVGGWKGF). Residues 471 to 491 (FRFPFALVLSASITVLSAFLI) form a helical membrane-spanning segment. Residues 492–497 (RRVNPH) are Vacuolar-facing. A helical membrane pass occupies residues 498-518 (IIYSSPYAVWAMTLSLFFLVF). Residues 519 to 536 (WTIAKGASVVRPSALQRG) are Cytoplasmic-facing. Residues 537 to 557 (YAHIWLFVISWVILVAVTAAA) form a helical membrane-spanning segment. The Vacuolar portion of the chain corresponds to 558–567 (DRFKIASGYP). The helical transmembrane segment at 568 to 588 (FAFFHSAVFVSALISLCDLFA) threads the bilayer. Topologically, residues 589-703 (LPSKQEFARN…NLPSWTWFFQ (115 aa)) are cytoplasmic. The disordered stretch occupies residues 623–653 (HSHVEDDVAEEPTETTPLRSGENGNGNNGTI). The chain crosses the membrane as a helical span at residues 704-724 (LLLLAPITITVFLQIALFIVS). The Vacuolar portion of the chain corresponds to 725-736 (AIHSAAADGNDP). The helical transmembrane segment at 737–757 (ILVYAAIAAFSIIILLPATPF) threads the bilayer. Topologically, residues 758–762 (IHRAS) are cytoplasmic. The helical transmembrane segment at 763 to 783 (FYLPLFLLLVFFVTLIYNLVA) threads the bilayer. At 784–1034 (FPFSAENRLK…LVEGRKKFRA (251 aa)) the chain is on the vacuolar side. N805, N866, and N879 each carry an N-linked (GlcNAc...) asparagine glycan.

It belongs to the peptidase M28 family. The cofactor is Zn(2+).

The protein resides in the vacuole membrane. Its function is as follows. May be involved in vacuolar sorting and osmoregulation. This Colletotrichum graminicola (strain M1.001 / M2 / FGSC 10212) (Maize anthracnose fungus) protein is Vacuolar membrane protease.